The chain runs to 930 residues: Isoleucine--tRNA ligase (930 aa).

A 'HIGH' region motif is present at residues 57-67 (PYANGNIHVGH). E554 lines the L-isoleucyl-5'-AMP pocket. The short motif at 595-599 (KMSKS) is the 'KMSKS' region element. An ATP-binding site is contributed by K598. The Zn(2+) site is built by C888, C891, C908, and C911.

This sequence belongs to the class-I aminoacyl-tRNA synthetase family. IleS type 1 subfamily. In terms of assembly, monomer. The cofactor is Zn(2+).

The protein localises to the cytoplasm. The catalysed reaction is tRNA(Ile) + L-isoleucine + ATP = L-isoleucyl-tRNA(Ile) + AMP + diphosphate. In terms of biological role, catalyzes the attachment of isoleucine to tRNA(Ile). As IleRS can inadvertently accommodate and process structurally similar amino acids such as valine, to avoid such errors it has two additional distinct tRNA(Ile)-dependent editing activities. One activity is designated as 'pretransfer' editing and involves the hydrolysis of activated Val-AMP. The other activity is designated 'posttransfer' editing and involves deacylation of mischarged Val-tRNA(Ile). The sequence is that of Isoleucine--tRNA ligase from Streptococcus pneumoniae (strain CGSP14).